We begin with the raw amino-acid sequence, 622 residues long: Chaperone protein HscA homolog (622 aa).

The protein belongs to the heat shock protein 70 family.

Chaperone involved in the maturation of iron-sulfur cluster-containing proteins. Has a low intrinsic ATPase activity which is markedly stimulated by HscB. This is Chaperone protein HscA homolog from Burkholderia ambifaria (strain MC40-6).